Reading from the N-terminus, the 163-residue chain is Cytochrome b6-f complex subunit 4 (163 aa).

The next 3 membrane-spanning stretches (helical) occupy residues 36-56, 95-115, and 131-151; these read LLYI…GLAV, LLGV…PFLE, and TVFL…TLPI.

It belongs to the cytochrome b family. PetD subfamily. As to quaternary structure, the 4 large subunits of the cytochrome b6-f complex are cytochrome b6, subunit IV (17 kDa polypeptide, petD), cytochrome f and the Rieske protein, while the 4 small subunits are petG, petL, petM and petN. The complex functions as a dimer.

Its subcellular location is the plastid. It is found in the chloroplast thylakoid membrane. Functionally, component of the cytochrome b6-f complex, which mediates electron transfer between photosystem II (PSII) and photosystem I (PSI), cyclic electron flow around PSI, and state transitions. The protein is Cytochrome b6-f complex subunit 4 of Drimys granadensis.